The following is a 229-amino-acid chain: Large ribosomal subunit protein uL1 (229 aa).

The protein belongs to the universal ribosomal protein uL1 family. As to quaternary structure, part of the 50S ribosomal subunit.

Binds directly to 23S rRNA. The L1 stalk is quite mobile in the ribosome, and is involved in E site tRNA release. In terms of biological role, protein L1 is also a translational repressor protein, it controls the translation of the L11 operon by binding to its mRNA. The sequence is that of Large ribosomal subunit protein uL1 from Lactiplantibacillus plantarum (strain ATCC BAA-793 / NCIMB 8826 / WCFS1) (Lactobacillus plantarum).